The primary structure comprises 372 residues: E3 ubiquitin-protein ligase RNF34 (372 aa).

The segment at Glu56 to Glu107 adopts an FYVE-type zinc-finger fold. The SAP 1 domain occupies Leu115–Thr134. Ser169 carries the phosphoserine modification. The tract at residues Gln194–Arg252 is disordered. Residues Asp201–Asn220 are compositionally biased toward polar residues. Residues Thr221–Glu240 are compositionally biased toward acidic residues. Residues Ser254 and Ser256 each carry the phosphoserine modification. Positions Val264 to Arg278 constitute an SAP 2 domain. The segment at Cys325 to Arg360 adopts an RING-type zinc-finger fold.

Interacts with CASP8 and CASP10. Interacts with p53/TP53; involved in p53/TP53 ubiquitination. Interacts (via RING-type zinc finger) with MDM2; the interaction stabilizes MDM2. Interacts (via RING-type zinc finger) with PPARGC1A. Interacts with NOD1. Autoubiquitinated (in vitro). In terms of processing, proteolytically cleaved by caspases upon induction of apoptosis by TNF.

The protein resides in the cell membrane. The protein localises to the endomembrane system. It is found in the nucleus. Its subcellular location is the nucleus speckle. It localises to the cytoplasm. The protein resides in the cytosol. The catalysed reaction is S-ubiquitinyl-[E2 ubiquitin-conjugating enzyme]-L-cysteine + [acceptor protein]-L-lysine = [E2 ubiquitin-conjugating enzyme]-L-cysteine + N(6)-ubiquitinyl-[acceptor protein]-L-lysine.. It participates in protein modification; protein ubiquitination. In terms of biological role, E3 ubiquitin-protein ligase that regulates several biological processes through the ubiquitin-mediated proteasomal degradation of various target proteins. Ubiquitinates the caspases CASP8 and CASP10, promoting their proteasomal degradation, to negatively regulate cell death downstream of death domain receptors in the extrinsic pathway of apoptosis. May mediate 'Lys-48'-linked polyubiquitination of RIPK1 and its subsequent proteasomal degradation thereby indirectly regulating the tumor necrosis factor-mediated signaling pathway. Negatively regulates p53/TP53 through its direct ubiquitination and targeting to proteasomal degradation. Indirectly, may also negatively regulate p53/TP53 through ubiquitination and degradation of SFN. Mediates PPARGC1A proteasomal degradation probably through ubiquitination thereby indirectly regulating the metabolism of brown fat cells. Possibly involved in innate immunity, through 'Lys-48'-linked polyubiquitination of NOD1 and its subsequent proteasomal degradation. This chain is E3 ubiquitin-protein ligase RNF34 (RNF34), found in Pongo abelii (Sumatran orangutan).